The sequence spans 883 residues: Phosphoenolpyruvate carboxylase (883 aa).

Active-site residues include His138 and Lys546.

This sequence belongs to the PEPCase type 1 family. Mg(2+) serves as cofactor.

The enzyme catalyses oxaloacetate + phosphate = phosphoenolpyruvate + hydrogencarbonate. Its function is as follows. Forms oxaloacetate, a four-carbon dicarboxylic acid source for the tricarboxylic acid cycle. The protein is Phosphoenolpyruvate carboxylase of Klebsiella pneumoniae (strain 342).